The sequence spans 256 residues: Polycomb group RING finger protein 5 (256 aa).

The RING-type zinc-finger motif lies at 18 to 57 (CYICKGYLIKPTTVTECLHTFCKTCIVQHFEDSNDCPRCG). 2 stretches are compositionally biased toward basic and acidic residues: residues 94-103 (ESEFWKKNKP) and 110-120 (DTSKADKPKVD). The interval 94–133 (ESEFWKKNKPQENGQDDTSKADKPKVDEEGDENEDDKDYH) is disordered.

As to quaternary structure, component of a PRC1-like complex that contains PCGF5, RNF2 and UBE2D3. Interacts with RNF2; the interaction is direct. Interacts with CBX6, CBX7 and CBX8. Interacts with AUTS2; the interaction is direct. Identified in a complex that contains AUTS2, PCGF5, CSNK2B and RNF2.

Its subcellular location is the nucleus. The protein resides in the nucleoplasm. Functionally, component of a Polycomb group (PcG) multiprotein PRC1-like complex, a complex class required to maintain the transcriptionally repressive state of many genes, including Hox genes, throughout development. PcG PRC1 complex acts via chromatin remodeling and modification of histones; it mediates monoubiquitination of histone H2A 'Lys-119', rendering chromatin heritably changed in its expressibility. Within the PRC1-like complex, regulates RNF2 ubiquitin ligase activity. Plays a redundant role with PCGF3 as part of a PRC1-like complex that mediates monoubiquitination of histone H2A 'Lys-119' on the X chromosome and is required for normal silencing of one copy of the X chromosome in XX females. This chain is Polycomb group RING finger protein 5 (PCGF5), found in Homo sapiens (Human).